Reading from the N-terminus, the 1239-residue chain is DNA polymerase subunit gamma-1 (1239 aa).

The disordered stretch occupies residues 1-68 (MSRLLWRKVA…PQVLSSEGGQ (68 aa)). 2 stretches are compositionally biased toward low complexity: residues 9-36 (VAGA…SDPS) and 44-60 (QQQQ…QQPQ). The does not contribute to polymerase and exonuclease enzymatic activities stretch occupies residues 43 to 55 (QQQQQQQQQQQQQ). The short motif at 196-200 (VFDVE) is the Exo I element. D198 functions as the Exonuclease activity in the catalytic mechanism. The short motif at 267–275 (VGHNVSFDR) is the Exo II element. S306 provides a ligand contact to DNA. The interval 318–340 (GKHKVQPPTKQGQKSQRKARRGP) is disordered. Residues 395–403 (YCAQDVWAT) carry the Exo III motif. The interval 506-531 (EPATASKLPIEGAGAPGDPMDQEDLG) is disordered. Residues 510–571 (ASKLPIEGAG…RPQHLPGHPG (62 aa)) are accessory-interacting determinant. RNA is bound at residue R579. DNA is bound at residue S593. Residues H754, G763, and K768 each coordinate RNA. DNA-binding residues include K806 and T849. The trigger loop stretch occupies residues 858–864 (TWLTASN). 2 residues coordinate RNA: S863 and R869. The Pol A signature appears at 887–896 (VGADVDSQEL). D890, V891, S893, E895, R943, K947, and Y951 together coordinate a 2'-deoxyribonucleoside 5'-triphosphate. Residues D890 and V891 each coordinate Mg(2+). A Pol B motif is present at residues 943-958 (REHAKIFNYGRIYGAG). T1094 and S1095 together coordinate DNA. The Pol C motif lies at 1134 to 1141 (HDEVRYLV). D1135 is a binding site for a 2'-deoxyribonucleoside 5'-triphosphate. Mg(2+) is bound at residue D1135.

The protein belongs to the DNA polymerase type-A family. In terms of assembly, heterotrimer composed of a catalytic subunit and a homodimer of accessory subunits (POLG:POLG2). Interacts with TTC3. Interacts with LIG3. Mg(2+) serves as cofactor.

Its subcellular location is the mitochondrion. It localises to the mitochondrion matrix. The protein localises to the mitochondrion nucleoid. It catalyses the reaction DNA(n) + a 2'-deoxyribonucleoside 5'-triphosphate = DNA(n+1) + diphosphate. The enzyme catalyses a 3'-end 2'-deoxyribonucleotidyl-deoxyribonucleotide-DNA + H2O = a 3'-end 2'-deoxyribonucleotide-DNA + a 2'-deoxyribonucleoside 5'-phosphate + H(+). It carries out the reaction a 5'-end 2'-deoxyribose-2'-deoxyribonucleotide-DNA = (2E,4S)-4-hydroxypenten-2-al-5-phosphate + a 5'-end 5'-phospho-2'-deoxyribonucleoside-DNA + H(+). Its activity is regulated as follows. Inhibited by dideoxynucleotides such as antiviral agent zalcitabine. Catalytic subunit of DNA polymerase gamma solely responsible for replication of mitochondrial DNA (mtDNA). Replicates both heavy and light strands of the circular mtDNA genome using a single-stranded DNA template, RNA primers and the four deoxyribonucleoside triphosphates as substrates. Has 5' -&gt; 3' polymerase activity. Functionally interacts with TWNK and SSBP1 at the replication fork to form a highly processive replisome, where TWNK unwinds the double-stranded DNA template prior to replication and SSBP1 covers the parental heavy strand to enable continuous replication of the entire mitochondrial genome. A single nucleotide incorporation cycle includes binding of the incoming nucleotide at the insertion site, a phosphodiester bond formation reaction that extends the 3'-end of the primer DNA, and translocation of the primer terminus to the post-insertion site. After completing replication of a mtDNA strand, mediates 3' -&gt; 5' exonucleolytic degradation at the nick to enable proper ligation. Highly accurate due to high nucleotide selectivity and 3' -&gt; 5' exonucleolytic proofreading. Proficiently corrects base substitutions, single-base additions and deletions in non-repetitive sequences and short repeats, but displays lower proofreading activity when replicating longer homopolymeric stretches. Exerts exonuclease activity toward single-stranded DNA and double-stranded DNA containing 3'-terminal mispairs. When a misincorporation occurs, transitions from replication to a pro-nucleolytic editing mode and removes the missincorporated nucleoside in the exonuclease active site. Proceeds via an SN2 nucleolytic mechanism in which Asp-198 catalyzes phosphodiester bond hydrolysis and Glu-200 stabilizes the leaving group. As a result the primer strand becomes one nucleotide shorter and is positioned in the post-insertion site, ready to resume DNA synthesis. Exerts 5'-deoxyribose phosphate (dRP) lyase activity and mediates repair-associated mtDNA synthesis (gap filling) in base-excision repair pathway. Catalyzes the release of the 5'-terminal 2-deoxyribose-5-phosphate sugar moiety from incised apurinic/apyrimidinic (AP) sites to produce a substrate for DNA ligase. The dRP lyase reaction does not require divalent metal ions and likely proceeds via a Schiff base intermediate in a beta-elimination reaction mechanism. The chain is DNA polymerase subunit gamma-1 from Homo sapiens (Human).